We begin with the raw amino-acid sequence, 178 residues long: ATP synthase subunit delta (178 aa).

It belongs to the ATPase delta chain family. In terms of assembly, F-type ATPases have 2 components, F(1) - the catalytic core - and F(0) - the membrane proton channel. F(1) has five subunits: alpha(3), beta(3), gamma(1), delta(1), epsilon(1). F(0) has three main subunits: a(1), b(2) and c(10-14). The alpha and beta chains form an alternating ring which encloses part of the gamma chain. F(1) is attached to F(0) by a central stalk formed by the gamma and epsilon chains, while a peripheral stalk is formed by the delta and b chains.

Its subcellular location is the cell inner membrane. Its function is as follows. F(1)F(0) ATP synthase produces ATP from ADP in the presence of a proton or sodium gradient. F-type ATPases consist of two structural domains, F(1) containing the extramembraneous catalytic core and F(0) containing the membrane proton channel, linked together by a central stalk and a peripheral stalk. During catalysis, ATP synthesis in the catalytic domain of F(1) is coupled via a rotary mechanism of the central stalk subunits to proton translocation. This protein is part of the stalk that links CF(0) to CF(1). It either transmits conformational changes from CF(0) to CF(1) or is implicated in proton conduction. The sequence is that of ATP synthase subunit delta from Nitrosospira multiformis (strain ATCC 25196 / NCIMB 11849 / C 71).